The chain runs to 2271 residues: Serine-rich adhesin for platelets (2271 aa).

The first 89 residues, 1 to 89, serve as a signal peptide directing secretion; that stretch reads MSKRQKAFHD…VNMLHDQQAF (89 aa). The interval 90-230 is serine-rich repeat region 1, SRR1; it reads AASDAPLTSE…KTSTTSTSTA (141 aa). Positions 100-111 are enriched in polar residues; that stretch reads LNTQSETVGNQN. The tract at residues 100–229 is disordered; that stretch reads LNTQSETVGN…NKTSTTSTST (130 aa). Over residues 112–128 the composition is skewed to low complexity; sequence STTIEASTSTADSTSVT. Positions 129 to 140 are enriched in polar residues; it reads KNSSSVQTSNSD. Residues 150 to 229 are compositionally biased toward low complexity; the sequence is VTSTTNSTSN…NKTSTTSTST (80 aa). The tract at residues 231-751 is non-repeat region (NRR); the sequence is PVKLRTFSRL…TTFKYEVTRN (521 aa). The segment at 245 to 491 is L-lectin module; the sequence is FASAATTTAV…QQVQFGTFEY (247 aa). Positions 365, 367, 369, and 382 each coordinate Ca(2+). Residues 492–571 form a beta-grasp module region; sequence TESAVTQVRY…NAGQSVTYYF (80 aa). Positions 572–659 are cadherin-like module-1; it reads TDVKAPTVTV…KSTTTFTINV (88 aa). Asp573, Lys575, Asp601, Asn602, Asp645, Asp661, Thr663, Asp690, Asn691, and Asp734 together coordinate Ca(2+). The tract at residues 660–751 is cadherin-like module-2; that stretch reads VDTTAPTVTP…TTFKYEVTRN (92 aa). Disordered regions lie at residues 751–791 and 806–2242; these read NSMS…VVST and SVSA…NGLL. 3 stretches are compositionally biased toward low complexity: residues 752–791, 806–1392, and 1402–2214; these read SMSD…VVST, SVSA…LSLS, and SNSA…ATSE. A serine-rich repeat region 2, SRR2 region spans residues 752–2232; sequence SMSDSVSTSG…AQSEKRLPDT (1481 aa). Positions 2229–2233 match the LPXTG sorting signal motif; it reads LPDTG. The residue at position 2232 (Thr2232) is a Pentaglycyl murein peptidoglycan amidated threonine. The propeptide at 2233–2271 is removed by sortase; sequence GDSIKQNGLLGGVMTLLVGLGLMKRKKKKDENDQDDSQA.

The protein belongs to the serine-rich repeat protein (SRRP) family. Proteolytically cleaved by a metalloprotease. Post-translationally, glycosylated. It is probable that most of the Ser residues in SSR1 and SSR2 are O-GlcNAcylated. Sequential glycosylation by sugar transferases are able to generate complex sugar polymorphisms.

The protein resides in the secreted. It localises to the cell wall. Mediates binding to human platelets, possibly through a receptor-ligand interaction. Probably associated with virulence in endovascular infection. Plays a positive role in biofilm formation, possibly by self-association via the non-repeat region (NRR or binding region, BR). Binds to and plays a role in human lung epithelial cell invasion via the L-lectin module of its NRR domain; N-acetylneuraminic acid (Neu5Ac) inhibits binding. Treatment of host cells with neuraminidase decreases adherence of S.aureus cells, suggesting SraP recognizes a host terminal Neu5Ac moiety as a receptor. The protein is Serine-rich adhesin for platelets of Staphylococcus aureus (strain NCTC 8325 / PS 47).